We begin with the raw amino-acid sequence, 145 residues long: Large ribosomal subunit protein uL16 (145 aa).

This sequence belongs to the universal ribosomal protein uL16 family. In terms of assembly, part of the 50S ribosomal subunit.

Binds 23S rRNA and is also seen to make contacts with the A and possibly P site tRNAs. The polypeptide is Large ribosomal subunit protein uL16 (Exiguobacterium sibiricum (strain DSM 17290 / CCUG 55495 / CIP 109462 / JCM 13490 / 255-15)).